The primary structure comprises 252 residues: Serine/threonine phosphatase stp (252 aa).

Residues 1–22 (MHAEFRTDRGRIRHHNEDNGGV) form a disordered region. A PPM-type phosphatase domain is found at 2 to 242 (HAEFRTDRGR…DNITVLLVER (241 aa)). The Mn(2+) site is built by D36, G37, D194, and D233.

It belongs to the PP2C family. Mn(2+) serves as cofactor.

The protein localises to the cytoplasm. It is found in the membrane. It carries out the reaction O-phospho-L-seryl-[protein] + H2O = L-seryl-[protein] + phosphate. The catalysed reaction is O-phospho-L-threonyl-[protein] + H2O = L-threonyl-[protein] + phosphate. Functionally, protein phosphatase that dephosphorylates EF-Tu. In Listeria innocua serovar 6a (strain ATCC BAA-680 / CLIP 11262), this protein is Serine/threonine phosphatase stp (stp).